The chain runs to 371 residues: Peptidyl-prolyl cis-trans isomerase CPR6 (371 aa).

The 168-residue stretch at 7–174 (FFDISIGGKP…RDVKIDDCGV (168 aa)) folds into the PPIase cyclophilin-type domain. TPR repeat units lie at residues 219–252 (IETV…LKEY), 270–303 (VSIP…EAAD), and 308–341 (AKAL…QPND).

This sequence belongs to the cyclophilin-type PPIase family. PPIase D subfamily. In terms of assembly, interacts with RPD3.

It is found in the cytoplasm. The enzyme catalyses [protein]-peptidylproline (omega=180) = [protein]-peptidylproline (omega=0). In terms of biological role, PPIases accelerate the folding of proteins. It catalyzes the cis-trans isomerization of proline imidic peptide bonds in oligopeptides. The sequence is that of Peptidyl-prolyl cis-trans isomerase CPR6 (CPR6) from Saccharomyces cerevisiae (strain ATCC 204508 / S288c) (Baker's yeast).